The primary structure comprises 476 residues: UDP-N-acetylmuramate--L-alanine ligase (476 aa).

112–118 (GTHGKTT) is an ATP binding site.

It belongs to the MurCDEF family.

The protein localises to the cytoplasm. It catalyses the reaction UDP-N-acetyl-alpha-D-muramate + L-alanine + ATP = UDP-N-acetyl-alpha-D-muramoyl-L-alanine + ADP + phosphate + H(+). It participates in cell wall biogenesis; peptidoglycan biosynthesis. Its function is as follows. Cell wall formation. This is UDP-N-acetylmuramate--L-alanine ligase from Magnetococcus marinus (strain ATCC BAA-1437 / JCM 17883 / MC-1).